The sequence spans 318 residues: tRNA U34 carboxymethyltransferase (318 aa).

Residues K85, W99, K104, G124, 175-176 (LD), M190, Y194, and R311 each bind carboxy-S-adenosyl-L-methionine.

It belongs to the class I-like SAM-binding methyltransferase superfamily. CmoB family. Homotetramer.

It catalyses the reaction carboxy-S-adenosyl-L-methionine + 5-hydroxyuridine(34) in tRNA = 5-carboxymethoxyuridine(34) in tRNA + S-adenosyl-L-homocysteine + H(+). Functionally, catalyzes carboxymethyl transfer from carboxy-S-adenosyl-L-methionine (Cx-SAM) to 5-hydroxyuridine (ho5U) to form 5-carboxymethoxyuridine (cmo5U) at position 34 in tRNAs. The chain is tRNA U34 carboxymethyltransferase from Ruthia magnifica subsp. Calyptogena magnifica.